Here is a 220-residue protein sequence, read N- to C-terminus: uncharacterized protein (220 aa).

Residues 20–42 traverse the membrane as a helical segment; it reads FFKKLVPIIIIISIVVITIMVII.

It is found in the membrane. This is an uncharacterized protein from Rickettsia prowazekii (strain Madrid E).